The sequence spans 160 residues: uncharacterized protein (160 aa).

Positions 2–140 (MIIIPNNEIA…KARRLKPEIP (139 aa)) constitute an N-acetyltransferase domain.

This is an uncharacterized protein from Bacillus subtilis (strain 168).